The following is a 389-amino-acid chain: Gibberellin 20 oxidase 2 (389 aa).

Positions 1-17 (MVAEHPTPPQPHQPPPM) are enriched in pro residues. The tract at residues 1 to 23 (MVAEHPTPPQPHQPPPMDSTAGS) is disordered. The 101-residue stretch at 224 to 324 (DSSSIMRCNY…RRSLAFFLCP (101 aa)) folds into the Fe2OG dioxygenase domain. Residues H249, D251, and H305 each contribute to the Fe cation site. R315 is a catalytic residue.

Belongs to the iron/ascorbate-dependent oxidoreductase family. GA20OX subfamily. Requires Fe cation as cofactor. L-ascorbate is required as a cofactor.

The catalysed reaction is gibberellin A12 + 2 2-oxoglutarate + 3 O2 + H(+) = gibberellin A9 + 2 succinate + 3 CO2 + 2 H2O. It catalyses the reaction gibberellin A53 + 2 2-oxoglutarate + 3 O2 + H(+) = gibberellin A20 + 2 succinate + 3 CO2 + 2 H2O. In terms of biological role, key oxidase enzyme in the biosynthesis of gibberellin that catalyzes the conversion of GA53 to GA20 via a three-step oxidation at C-20 of the GA skeleton. This chain is Gibberellin 20 oxidase 2 (20ox2), found in Oryza sativa subsp. indica (Rice).